The sequence spans 107 residues: MKVYLIYVLAAVAEIAGCFSFWAWLKLGKTGWILLPGMVALAAFAWLLTLVATEAAGRAYAAYGGIYIAASLFWLWGVEGHAPDRWDIAGGVVCLAGTAIILFGPRG.

4 consecutive transmembrane segments (helical) span residues Leu5 to Leu25, Trp32 to Ala52, Ala59 to Glu79, and Arg85 to Pro105.

Belongs to the UPF0060 family.

It is found in the cell inner membrane. This Agrobacterium fabrum (strain C58 / ATCC 33970) (Agrobacterium tumefaciens (strain C58)) protein is UPF0060 membrane protein Atu1058.